The sequence spans 121 residues: Large ribosomal subunit protein bL20 (121 aa).

This sequence belongs to the bacterial ribosomal protein bL20 family.

Binds directly to 23S ribosomal RNA and is necessary for the in vitro assembly process of the 50S ribosomal subunit. It is not involved in the protein synthesizing functions of that subunit. This Beijerinckia indica subsp. indica (strain ATCC 9039 / DSM 1715 / NCIMB 8712) protein is Large ribosomal subunit protein bL20.